Consider the following 546-residue polypeptide: Probable protein kinase UbiB (546 aa).

Residues 123 to 501 (DFQEIPLASA…RTNHGQALFL (379 aa)) enclose the Protein kinase domain. Residues 129 to 137 (LASASISQV) and K152 contribute to the ATP site. Residue D287 is the Proton acceptor of the active site. 2 helical membrane passes run 497-517 (QALF…FLYI) and 521-541 (YLKI…TIGW).

Belongs to the ABC1 family. UbiB subfamily.

Its subcellular location is the cell inner membrane. The protein operates within cofactor biosynthesis; ubiquinone biosynthesis [regulation]. Functionally, is probably a protein kinase regulator of UbiI activity which is involved in aerobic coenzyme Q (ubiquinone) biosynthesis. The chain is Probable protein kinase UbiB from Blochmanniella pennsylvanica (strain BPEN).